The primary structure comprises 1014 residues: Protein argonaute 2 (1014 aa).

Basic and acidic residues predominate over residues 1-15; the sequence is MERGGYRGGRGDGRG. The interval 1–137 is disordered; sequence MERGGYRGGR…PSTSTTVVSE (137 aa). 2 stretches are compositionally biased toward gly residues: residues 18–29 and 49–58; these read GRGYGGGGGGGE and RGGGNRGQGR. Residues 83 to 104 are compositionally biased toward low complexity; the sequence is QFQQPRPQVAPQPSQAPASYAG. Positions 105–114 are enriched in gly residues; sequence SVGGVAGRGA. Residues 121 to 137 show a composition bias toward low complexity; sequence VPSDSASPSTSTTVVSE. In terms of domain architecture, PAZ spans 369-482; that stretch reads SVIEYLKLYF…VPMEFCDLVE (114 aa). The Piwi domain occupies 666–965; that stretch reads LVLCAMSRKD…VAFRGRMYHE (300 aa). Interaction with guide RNA stretches follow at residues 857 to 858, 900 to 908, and 937 to 959; these read KR, HHGGIGTSK, and FTRC…VAFR.

Belongs to the argonaute family. Ago subfamily. In terms of assembly, interacts with NERD.

Functionally, involved in RNA-mediated post-transcriptional gene silencing (PTGS). Main component of the RNA-induced silencing complex (RISC) that binds to a short guide RNA such as microRNA (miRNA) or small interfering RNA (siRNA). RISC uses the mature miRNA or siRNA as a guide for slicer-directed cleavage of homologous mRNAs to repress gene expression. Associates mainly with siRNAs of 21 nucleotide in length and preferentially recruits small RNAs with a 5' terminal adenosine. Probably involved in antiviral RNA silencing. Associates with siRNA derived from cucumber mosaic virus (CMV). Targeted by turnip yellows virus (TuYV) protein P0 (via F-box-like domain) for probable proteasome degradation and thereby inactivating AGO2 function in RNA silencing. Required to direct NERD-dependent DNA methylation and silencing. This is Protein argonaute 2 (AGO2) from Arabidopsis thaliana (Mouse-ear cress).